A 474-amino-acid chain; its full sequence is Bifunctional ribulose 5-phosphate reductase/CDP-ribitol pyrophosphorylase Bcs1 (474 aa).

The ribitol-5-phosphate cytidylyltransferase stretch occupies residues 1–238; it reads MNKNKNIGII…DKLFQSRSHF (238 aa). Residues 250–474 are ribulose-5-phosphate reductase; the sequence is YDMKDQVLVV…ITNILADLYK (225 aa).

It in the N-terminal section; belongs to the IspD/TarI cytidylyltransferase family. In the C-terminal section; belongs to the short-chain dehydrogenases/reductases (SDR) family. Monomer.

The catalysed reaction is D-ribitol 5-phosphate + CTP + H(+) = CDP-L-ribitol + diphosphate. The enzyme catalyses D-ribitol 5-phosphate + NADP(+) = D-ribulose 5-phosphate + NADPH + H(+). Its pathway is capsule biogenesis; capsule polysaccharide biosynthesis. In terms of biological role, catalyzes the NADPH-dependent reduction of D-ribulose 5-phosphate to D-ribitol 5-phosphate and the further reaction of D-ribitol 5-phosphate with CTP to form CDP-ribitol. The protein is Bifunctional ribulose 5-phosphate reductase/CDP-ribitol pyrophosphorylase Bcs1 of Haemophilus influenzae.